The chain runs to 176 residues: Peptidyl-prolyl cis-trans isomerase cyp5 (176 aa).

Positions 10-173 (FFDVAVNGKP…AKVEIVDCGE (164 aa)) constitute a PPIase cyclophilin-type domain.

It belongs to the cyclophilin-type PPIase family.

The catalysed reaction is [protein]-peptidylproline (omega=180) = [protein]-peptidylproline (omega=0). PPIases accelerate the folding of proteins. It catalyzes the cis-trans isomerization of proline imidic peptide bonds in oligopeptides. This chain is Peptidyl-prolyl cis-trans isomerase cyp5 (cyp5), found in Rhizopus delemar (strain RA 99-880 / ATCC MYA-4621 / FGSC 9543 / NRRL 43880) (Mucormycosis agent).